Reading from the N-terminus, the 527-residue chain is Homeobox protein NOBOX (527 aa).

Disordered regions lie at residues M1–K126, V194–P245, V271–P306, and E488–E527. The homeobox DNA-binding region spans R136–E195. The span at V194–K203 shows a compositional bias: basic and acidic residues. Positions E488 to E506 are enriched in polar residues. A compositionally biased stretch (basic and acidic residues) spans E511–E527.

As to expression, specifically expressed in ovaries and testes. In ovaries, expressed in oocytes from primordial through antral follicles but not in granulosa cells, theca cells and corpora lutea.

It localises to the nucleus. Transcription factor which plays an essential role in postnatal follicle development. Binds preferentially to the DNA sequences 5'-TAATTG-3', 5'-TAGTTG-3' and 5'-TAATTA-3'. Directly regulates the transcription of POU5F1 and GDF9 during early folliculogenesis. The chain is Homeobox protein NOBOX (Nobox) from Mus musculus (Mouse).